Here is a 122-residue protein sequence, read N- to C-terminus: SLMQFETMIMKVAGRSGVWWYGSYGCYCGKGGQGQPQDASDRCCFVHDCCYGKVNGCDPKDDFYTYSSENGDVVCEEDNPCTKEICECDKAAAICFRDNMDTYQNKYWFYPTKYCKEESEPC.

Intrachain disulfides connect C26–C115, C28–C44, C43–C95, C49–C122, C50–C88, C57–C81, and C75–C86. 3 residues coordinate Ca(2+): Y27, G29, and G31. H47 is a catalytic residue. D48 provides a ligand contact to Ca(2+). The active site involves D89.

Monomer. Requires Ca(2+) as cofactor. In terms of tissue distribution, expressed by the venom gland.

It is found in the secreted. It catalyses the reaction a 1,2-diacyl-sn-glycero-3-phosphocholine + H2O = a 1-acyl-sn-glycero-3-phosphocholine + a fatty acid + H(+). Functionally, snake venom phospholipase A2 (PLA2) that weakly inhibits ADP-induced platelet aggregation when tested on platelet rich plasma from human and rabbit blood (15-25% of inhibition at 5-10 ug of enzyme). Exhibits moderate hydrolytic activities toward L-dipalmitoyl phosphatidylcholine. PLA2 catalyzes the calcium-dependent hydrolysis of the 2-acyl groups in 3-sn-phosphoglycerides. This Craspedocephalus puniceus (Flat-nosed pitviper) protein is Acidic phospholipase A2 Tpu-E6b.